The chain runs to 189 residues: Chitin synthase 1 (189 aa).

The protein belongs to the chitin synthase family. Class I subfamily.

The protein resides in the cell membrane. The enzyme catalyses [(1-&gt;4)-N-acetyl-beta-D-glucosaminyl](n) + UDP-N-acetyl-alpha-D-glucosamine = [(1-&gt;4)-N-acetyl-beta-D-glucosaminyl](n+1) + UDP + H(+). Polymerizes chitin, a structural polymer of the cell wall and septum, by transferring the sugar moiety of UDP-GlcNAc to the non-reducing end of the growing chitin polymer. This is Chitin synthase 1 (CHS1) from Ajellomyces capsulatus (Darling's disease fungus).